We begin with the raw amino-acid sequence, 347 residues long: NADH-quinone oxidoreductase subunit H (347 aa).

Helical transmembrane passes span 13–33 (IIMI…IAYV), 50–70 (PNVV…KFVF), 82–102 (AVFL…WAVV), 115–135 (VGIL…IMGG), 161–181 (IGFV…TDIV), 198–218 (FLDW…ISAL), 263–283 (CSLT…IWIL), 286–306 (VPGI…FAMV), and 321–341 (LGWK…AFVL).

It belongs to the complex I subunit 1 family. As to quaternary structure, NDH-1 is composed of 14 different subunits. Subunits NuoA, H, J, K, L, M, N constitute the membrane sector of the complex.

The protein localises to the cell inner membrane. It carries out the reaction a quinone + NADH + 5 H(+)(in) = a quinol + NAD(+) + 4 H(+)(out). Functionally, NDH-1 shuttles electrons from NADH, via FMN and iron-sulfur (Fe-S) centers, to quinones in the respiratory chain. The immediate electron acceptor for the enzyme in this species is believed to be ubiquinone. Couples the redox reaction to proton translocation (for every two electrons transferred, four hydrogen ions are translocated across the cytoplasmic membrane), and thus conserves the redox energy in a proton gradient. This subunit may bind ubiquinone. The sequence is that of NADH-quinone oxidoreductase subunit H from Rhizobium leguminosarum bv. trifolii (strain WSM2304).